The following is a 183-amino-acid chain: Dual-action ribosomal maturation protein DarP (183 aa).

Residues Met-1 to Glu-23 form a disordered region. The segment covering Asp-7–Glu-23 has biased composition (acidic residues).

The protein belongs to the DarP family.

The protein localises to the cytoplasm. Functionally, member of a network of 50S ribosomal subunit biogenesis factors which assembles along the 30S-50S interface, preventing incorrect 23S rRNA structures from forming. Promotes peptidyl transferase center (PTC) maturation. The chain is Dual-action ribosomal maturation protein DarP from Cronobacter sakazakii (strain ATCC BAA-894) (Enterobacter sakazakii).